Here is a 376-residue protein sequence, read N- to C-terminus: Putative F-box protein At1g30930 (376 aa).

One can recognise an F-box domain in the interval M1–L44.

The sequence is that of Putative F-box protein At1g30930 from Arabidopsis thaliana (Mouse-ear cress).